A 182-amino-acid chain; its full sequence is Large ribosomal subunit protein uL5m (182 aa).

The protein belongs to the universal ribosomal protein uL5 family.

It localises to the mitochondrion. The protein is Large ribosomal subunit protein uL5m (RPL5) of Reclinomonas americana.